Reading from the N-terminus, the 159-residue chain is Ribosomal RNA large subunit methyltransferase H (159 aa).

Residues Leu-76, Gly-108, and Phe-127–Leu-132 contribute to the S-adenosyl-L-methionine site.

The protein belongs to the RNA methyltransferase RlmH family. In terms of assembly, homodimer.

It localises to the cytoplasm. The catalysed reaction is pseudouridine(1915) in 23S rRNA + S-adenosyl-L-methionine = N(3)-methylpseudouridine(1915) in 23S rRNA + S-adenosyl-L-homocysteine + H(+). Functionally, specifically methylates the pseudouridine at position 1915 (m3Psi1915) in 23S rRNA. The polypeptide is Ribosomal RNA large subunit methyltransferase H (Streptococcus gordonii (strain Challis / ATCC 35105 / BCRC 15272 / CH1 / DL1 / V288)).